A 539-amino-acid chain; its full sequence is Prolyl 4-hydroxylase subunit alpha-2 (539 aa).

An N-terminal signal peptide occupies residues 1 to 16 (MRAVLLVCLLAGLAHA). Asn110 carries an N-linked (GlcNAc...) asparagine glycan. One can recognise a Fe2OG dioxygenase domain in the interval 401 to 509 (TSEELQVANY…KWVSNKWIHE (109 aa)). The Fe cation site is built by His419, Asp421, and His490. Lys500 contacts 2-oxoglutarate.

Belongs to the P4HA family. Heterotetramer of two alpha chains and two beta chains. Exist either as a phy-2(2)/pdi-2(2) tetramer or as a phy-1/phy-2/pdi-2(2) tetramer. Requires Fe(2+) as cofactor. It depends on L-ascorbate as a cofactor.

Its subcellular location is the endoplasmic reticulum lumen. The enzyme catalyses L-prolyl-[collagen] + 2-oxoglutarate + O2 = trans-4-hydroxy-L-prolyl-[collagen] + succinate + CO2. In terms of biological role, catalyzes the post-translational formation of 4-hydroxyproline in -Xaa-Pro-Gly- sequences in collagens and other proteins. The sequence is that of Prolyl 4-hydroxylase subunit alpha-2 (phy-2) from Caenorhabditis elegans.